A 433-amino-acid chain; its full sequence is Eukaryotic translation initiation factor 3 subunit E (433 aa).

In terms of domain architecture, PCI spans F217 to L390.

This sequence belongs to the eIF-3 subunit E family. In terms of assembly, component of the eukaryotic translation initiation factor 3 (eIF-3) complex.

Its subcellular location is the cytoplasm. Component of the eukaryotic translation initiation factor 3 (eIF-3) complex, which is involved in protein synthesis of a specialized repertoire of mRNAs and, together with other initiation factors, stimulates binding of mRNA and methionyl-tRNAi to the 40S ribosome. The eIF-3 complex specifically targets and initiates translation of a subset of mRNAs involved in cell proliferation. This is Eukaryotic translation initiation factor 3 subunit E (eIF3-S6) from Anopheles gambiae (African malaria mosquito).